Reading from the N-terminus, the 677-residue chain is Galactocerebrosidase (677 aa).

Positions 1-33 (MGTVPAGSRRAPGCGEGMFILCLALLLAPGAPA) are cleaved as a signal peptide. The substrate site is built by threonine 101, tryptophan 143, and asparagine 189. The active-site Proton donor/acceptor is glutamate 190. The active-site Nucleophile is the glutamate 265. Cysteine 278 and cysteine 385 are oxidised to a cystine. Residues asparagine 291, asparagine 370, and asparagine 381 are each glycosylated (N-linked (GlcNAc...) asparagine). Arginine 387 provides a ligand contact to substrate. N-linked (GlcNAc...) asparagine glycosylation is found at asparagine 394, asparagine 399, asparagine 424, asparagine 441, asparagine 509, asparagine 549, and asparagine 630.

This sequence belongs to the glycosyl hydrolase 59 family.

It localises to the lysosome. It catalyses the reaction a beta-D-galactosyl-(1&lt;-&gt;1')-N-acylsphing-4-enine + H2O = an N-acylsphing-4-enine + D-galactose. The enzyme catalyses beta-D-galactosyl-(1&lt;-&gt;1)-sphing-4-enine + H2O = sphing-4-enine + D-galactose. It carries out the reaction a D-galactosylceramide + H2O = an N-acyl-sphingoid base + D-galactose. Hydrolyzes the galactose ester bonds of glycolipids such as galactosylceramide and galactosylsphingosine. In Xenopus laevis (African clawed frog), this protein is Galactocerebrosidase.